The primary structure comprises 99 residues: Large ribosomal subunit protein bL21 (99 aa).

The protein belongs to the bacterial ribosomal protein bL21 family. As to quaternary structure, part of the 50S ribosomal subunit. Contacts protein L20.

Its function is as follows. This protein binds to 23S rRNA in the presence of protein L20. The protein is Large ribosomal subunit protein bL21 of Mycoplasma mobile (strain ATCC 43663 / 163K / NCTC 11711) (Mesomycoplasma mobile).